The primary structure comprises 249 residues: BPI fold-containing family A member 1 (249 aa).

The first 15 residues, M1–A15, serve as a signal peptide directing secretion. An important for surfactant activity and antibacterial properties region spans residues L81 to L86. The N-linked (GlcNAc...) asparagine glycan is linked to N151. A disulfide bond links C173 and C217.

The protein belongs to the BPI/LBP/Plunc superfamily. Plunc family. As to quaternary structure, monomer. Interacts (via N-terminus) with SCNN1B, a subunit of the heterotrimeric epithelial sodium channel (ENaC); this inhibits proteolytic activation of ENaC. Expressed in lung and trachea.

Its subcellular location is the secreted. Lipid-binding protein which shows high specificity for the surfactant phospholipid dipalmitoylphosphatidylcholine (DPPC). Plays a role in the innate immune responses of the upper airways. Reduces the surface tension in secretions from airway epithelia and inhibits the formation of biofilm by pathogenic Gram-negative bacteria, such as P.aeruginosa and K.pneumoniae. Negatively regulates proteolytic cleavage of SCNN1G, an event that is required for activation of the epithelial sodium channel (ENaC), and thereby contributes to airway surface liquid homeostasis and proper clearance of mucus. Plays a role in the airway inflammatory response after exposure to irritants. May attract macrophages and neutrophils. The polypeptide is BPI fold-containing family A member 1 (BPIFA1) (Sus scrofa (Pig)).